A 316-amino-acid polypeptide reads, in one-letter code: Beta-galactosidase small subunit (316 aa).

It belongs to the bacterial beta-galactosidase small subunit family. As to quaternary structure, heterodimer of a large (LacL) and a small subunit (LacM).

The catalysed reaction is Hydrolysis of terminal non-reducing beta-D-galactose residues in beta-D-galactosides.. Its function is as follows. Component of a beta-galactosidase. The polypeptide is Beta-galactosidase small subunit (lacM) (Lactobacillus acidophilus (strain ATCC 700396 / NCK56 / N2 / NCFM)).